Here is a 364-residue protein sequence, read N- to C-terminus: MKFNEFLNHLSNYEPGKDIELIAKEYGVKEVIKLASNENPFGTPSKAIECLRQNANKAHLYPDDSMVELKSALAQKYKIQNENIIIGAGSDQVIEFAIHSKLNSKNAFLQAGVTFAMYEIYAKQCGAKCYKTQSITHNLDEFKKLYETHKDEIKLIFLCLPNNPLGECLDASEVIEFIKGVHKDCLVVIDAAYNEFASFKDSKKHLEPCELIKEFENVLYLGTFSKLYGLGGLRIGYGIANANIISAFYKLRAPFNVSNLALKAAVVAMDDDEFTKKTLENNFSQMQLYKEFAKKYDIKIIDSYTNFITYFFDEKNSTDLSEKLLKKGIIIRNLKSYGLNAIRITIGTSYENERFFTEFDKILR.

K226 carries the N6-(pyridoxal phosphate)lysine modification.

It belongs to the class-II pyridoxal-phosphate-dependent aminotransferase family. Histidinol-phosphate aminotransferase subfamily. Homodimer. Pyridoxal 5'-phosphate serves as cofactor.

The enzyme catalyses L-histidinol phosphate + 2-oxoglutarate = 3-(imidazol-4-yl)-2-oxopropyl phosphate + L-glutamate. It functions in the pathway amino-acid biosynthesis; L-histidine biosynthesis; L-histidine from 5-phospho-alpha-D-ribose 1-diphosphate: step 7/9. The chain is Histidinol-phosphate aminotransferase from Campylobacter jejuni subsp. doylei (strain ATCC BAA-1458 / RM4099 / 269.97).